Here is a 409-residue protein sequence, read N- to C-terminus: MHWGVGFASSRPCVVDLSWNQSISFFGWWAGSEEPFSFYGDIIAFPLQDYGGIMAGLGSDPWWKKTLYLTGGALLAAAAYLLHELLVIRKQQELDSKDAIILHQFARPNNGVPSLSPFCLKMETYLRMADLPYQNYFGGKLSAQGKMPWIEYNNEKVSGTEFIIDFLEEKLGVNLNKSLGPHERAVSRAVTKMVEEHFYWTLAYCQWVDNLNETRKMLSLSGGGPFSNLLRWVVCHITKGIVKREMHGHGIGRFSEEEIYMLMEKDMRSLAGLLGDKKYIMGPKLSTLDATVFGHLAQAMWTLPGTRPERLIKGELINLAMYCERIRRKFWPEWHHDDDNTIYESEESSEGSKTHTPMLDFSFYSRTETFEDEGAENSFSRTPDTDFTGHSLFDSDVEMDDYTDHEQCK.

Residues 68-88 (YLTGGALLAAAAYLLHELLVI) form a helical membrane-spanning segment. The tract at residues 372 to 393 (DEGAENSFSRTPDTDFTGHSLF) is disordered.

Belongs to the FAX family.

The protein resides in the membrane. Its function is as follows. May play a role in axonal development. The sequence is that of Failed axon connections homolog (Faxc) from Mus musculus (Mouse).